Here is a 177-residue protein sequence, read N- to C-terminus: ATP synthase subunit delta (177 aa).

It belongs to the ATPase delta chain family. In terms of assembly, F-type ATPases have 2 components, F(1) - the catalytic core - and F(0) - the membrane proton channel. F(1) has five subunits: alpha(3), beta(3), gamma(1), delta(1), epsilon(1). F(0) has three main subunits: a(1), b(2) and c(10-14). The alpha and beta chains form an alternating ring which encloses part of the gamma chain. F(1) is attached to F(0) by a central stalk formed by the gamma and epsilon chains, while a peripheral stalk is formed by the delta and b chains.

The protein resides in the cell inner membrane. Its function is as follows. F(1)F(0) ATP synthase produces ATP from ADP in the presence of a proton or sodium gradient. F-type ATPases consist of two structural domains, F(1) containing the extramembraneous catalytic core and F(0) containing the membrane proton channel, linked together by a central stalk and a peripheral stalk. During catalysis, ATP synthesis in the catalytic domain of F(1) is coupled via a rotary mechanism of the central stalk subunits to proton translocation. In terms of biological role, this protein is part of the stalk that links CF(0) to CF(1). It either transmits conformational changes from CF(0) to CF(1) or is implicated in proton conduction. This Pseudoalteromonas translucida (strain TAC 125) protein is ATP synthase subunit delta.